Reading from the N-terminus, the 282-residue chain is Pantothenate synthetase (282 aa).

30 to 37 (MGYLHEGH) lines the ATP pocket. The Proton donor role is filled by His37. Gln61 is a (R)-pantoate binding site. Gln61 contacts beta-alanine. 147 to 150 (GMKD) lines the ATP pocket. Gln153 lines the (R)-pantoate pocket. Residues Val176 and 184 to 187 (KSSR) each bind ATP.

Belongs to the pantothenate synthetase family. Homodimer.

It is found in the cytoplasm. The enzyme catalyses (R)-pantoate + beta-alanine + ATP = (R)-pantothenate + AMP + diphosphate + H(+). It participates in cofactor biosynthesis; (R)-pantothenate biosynthesis; (R)-pantothenate from (R)-pantoate and beta-alanine: step 1/1. Functionally, catalyzes the condensation of pantoate with beta-alanine in an ATP-dependent reaction via a pantoyl-adenylate intermediate. The protein is Pantothenate synthetase of Bacillus cereus (strain ATCC 14579 / DSM 31 / CCUG 7414 / JCM 2152 / NBRC 15305 / NCIMB 9373 / NCTC 2599 / NRRL B-3711).